Here is a 56-residue protein sequence, read N- to C-terminus: Large ribosomal subunit protein bL32 (56 aa).

The tract at residues 1-29 (MAVQQNKPSRSKRGMRRSHDALTTSSVSV) is disordered.

The protein belongs to the bacterial ribosomal protein bL32 family.

The chain is Large ribosomal subunit protein bL32 from Pectobacterium atrosepticum (strain SCRI 1043 / ATCC BAA-672) (Erwinia carotovora subsp. atroseptica).